The sequence spans 338 residues: 1-aminocyclopropane-1-carboxylate deaminase (338 aa).

K51 is modified (N6-(pyridoxal phosphate)lysine). S78 functions as the Nucleophile in the catalytic mechanism.

Belongs to the ACC deaminase/D-cysteine desulfhydrase family. In terms of assembly, homotrimer. It depends on pyridoxal 5'-phosphate as a cofactor.

It catalyses the reaction 1-aminocyclopropane-1-carboxylate + H2O = 2-oxobutanoate + NH4(+). Functionally, catalyzes a cyclopropane ring-opening reaction, the irreversible conversion of 1-aminocyclopropane-1-carboxylate (ACC) to ammonia and alpha-ketobutyrate. Allows growth on ACC as a nitrogen source. The polypeptide is 1-aminocyclopropane-1-carboxylate deaminase (Pseudomonas syringae pv. tomato (strain ATCC BAA-871 / DC3000)).